A 256-amino-acid polypeptide reads, in one-letter code: Acetylglutamate kinase (256 aa).

Substrate-binding positions include 40–41, Arg-62, and Asn-154; that span reads GG.

Belongs to the acetylglutamate kinase family. ArgB subfamily.

The protein resides in the cytoplasm. The enzyme catalyses N-acetyl-L-glutamate + ATP = N-acetyl-L-glutamyl 5-phosphate + ADP. Its pathway is amino-acid biosynthesis; L-arginine biosynthesis; N(2)-acetyl-L-ornithine from L-glutamate: step 2/4. Its function is as follows. Catalyzes the ATP-dependent phosphorylation of N-acetyl-L-glutamate. This chain is Acetylglutamate kinase, found in Staphylococcus aureus (strain MRSA252).